The primary structure comprises 316 residues: Pantothenate kinase (316 aa).

95-102 (GSVAVGKS) contacts ATP.

This sequence belongs to the prokaryotic pantothenate kinase family.

The protein resides in the cytoplasm. The catalysed reaction is (R)-pantothenate + ATP = (R)-4'-phosphopantothenate + ADP + H(+). The protein operates within cofactor biosynthesis; coenzyme A biosynthesis; CoA from (R)-pantothenate: step 1/5. The sequence is that of Pantothenate kinase from Cronobacter sakazakii (strain ATCC BAA-894) (Enterobacter sakazakii).